A 619-amino-acid chain; its full sequence is Magnesium-chelatase 67 kDa subunit (619 aa).

ATP is bound at residue serine 33 to serine 40. The segment at threonine 273–glutamate 321 is disordered. Positions proline 280–glutamate 321 are enriched in acidic residues. Positions leucine 431–serine 619 constitute a VWFA domain.

Belongs to the Mg-chelatase subunits D/I family.

The catalysed reaction is protoporphyrin IX + Mg(2+) + ATP + H2O = Mg-protoporphyrin IX + ADP + phosphate + 3 H(+). It functions in the pathway porphyrin-containing compound metabolism; bacteriochlorophyll biosynthesis. Functionally, involved in bacteriochlorophyll biosynthesis; introduces a magnesium ion into protoporphyrin IX to yield Mg-protoporphyrin IX. The chain is Magnesium-chelatase 67 kDa subunit (bchD) from Chlorobaculum parvum (strain DSM 263 / NCIMB 8327) (Chlorobium vibrioforme subsp. thiosulfatophilum).